Consider the following 320-residue polypeptide: Putative polysaccharide deacetylase (320 aa).

In terms of domain architecture, NodB homology spans 69-303; sequence RSIESCFEYG…ITSKEGVWVA (235 aa).

This sequence belongs to the polysaccharide deacetylase family. As to quaternary structure, homodimer.

It is found in the prospore. Functionally, may deacetylate chitin. Required for spore formation. The sequence is that of Putative polysaccharide deacetylase from Schizosaccharomyces pombe (strain 972 / ATCC 24843) (Fission yeast).